Reading from the N-terminus, the 2038-residue chain is Non-reducing polyketide synthase ZEA1 (2038 aa).

Residues 9 to 246 (LLFGDQTDSW…NELNIHALQH (238 aa)) form an N-terminal acylcarrier protein transacylase domain (SAT) region. The 431-residue stretch at 364–794 (PGRIAIVGMA…GGNACILLED (431 aa)) folds into the Ketosynthase family 3 (KS3) domain. Residues cysteine 537, histidine 672, and histidine 711 each act as for beta-ketoacyl synthase activity in the active site. A malonyl-CoA:ACP transacylase (MAT) domain region spans residues 888 to 1172 (VFVFTGQGSH…VCSSFVRATL (285 aa)). Serine 979 functions as the For acyl/malonyl transferase activity in the catalytic mechanism. The tract at residues 1221–1572 (SLLNLPTYAW…HFHEVENAVL (352 aa)) is product template (PT) domain. Residues 1254 to 1405 (HETFKANIST…GQLIQARWDK (152 aa)) are N-terminal hotdog fold. The PKS/mFAS DH domain maps to 1254–1573 (HETFKANIST…FHEVENAVLD (320 aa)). The segment at 1425–1573 (ISHRLQPQIL…FHEVENAVLD (149 aa)) is C-terminal hotdog fold. Residues 1616-1693 (QSDAHVLDSI…DLRRVFAPKS (78 aa)) enclose the Carrier domain. Serine 1653 bears the O-(pantetheine 4'-phosphoryl)serine mark. The segment at 1700–1738 (NDLSRPSLVDDTSQALQSSGSESFDQPPTSVTSTSDSGS) is disordered. Residues 1709–1737 (DDTSQALQSSGSESFDQPPTSVTSTSDSG) are compositionally biased toward polar residues. Positions 1778-1882 (TGTIATYIHL…PRSKTVEDKN (105 aa)) are thioesterase (TE) domain. Histidine 2021 serves as the catalytic For thioesterase activity.

It participates in mycotoxin biosynthesis. Non-reducing polyketide synthase; part of the gene cluster that mediates the biosynthesis of zearalenone (ZEA), a nonsteroid estrogen that is a contaminant of cereal grains and causes estrogenic disorders in humans and animals. The ZEA backbone is synthesized from a single acetyl-CoA molecule and eight malonyl-CoA molecules. The reducing polyketide synthase ZEA2 is proposed to synthesize a reduced hexaketide intermediate by using different combinations of its reductive domains during each round of condensation. The hexaketide thioester is then transacylated to the non-reducing polyketide synthase ZEA1 and is further condensed with three malonyl-CoAs without reductive tailoring to yield a mixed reduced/unreduced nonaketide. ZEA1 must be able to interact with ZEA2 to facilitate starter-unit acyltransfer and initiate polyketide biosynthesis. ZEA1 also mediates the required C2-C7 cyclization to form the resorcylate core and catalyzes the formation of the macrolactone. ZEA1 exhibits broad starter-unit specificities toward fatty acyl-CoAs ranging in sizes between C6 and C16 and displays the highest activity toward decanoyl-CoA. ZEB1 is then responsible for the chemical conversion of beta-zearalenonol (beta-ZOL) to ZEA in the biosynthetic pathway. The protein is Non-reducing polyketide synthase ZEA1 of Gibberella zeae (strain ATCC MYA-4620 / CBS 123657 / FGSC 9075 / NRRL 31084 / PH-1) (Wheat head blight fungus).